Here is a 188-residue protein sequence, read N- to C-terminus: Diphosphoinositol polyphosphate phosphohydrolase DDP1 (188 aa).

A compositionally biased stretch (basic and acidic residues) spans 1–21 (MGKTADNHGPVRSETAREGRE). The interval 1 to 23 (MGKTADNHGPVRSETAREGRENQ) is disordered. The Nudix hydrolase domain occupies 30–179 (GARLVAGCIC…KRPELLEALN (150 aa)). The 1D-myo-inositol hexakisphosphate site is built by Arg32, Ser52, Ser53, and Lys63. 5-diphospho-1D-myo-inositol 1,2,3,4,6-pentakisphosphate-binding residues include Arg32, Ser52, Ser53, and Lys63. Residues Arg32, Ser52, Ser53, and Lys63 each coordinate P(1),P(5)-bis(5'-adenosyl) pentaphosphate. Mg(2+)-binding residues include Lys63, Glu80, and Glu84. Positions 65 to 86 (GVEKDEPNYETTAQRETWEEAG) match the Nudix box motif. Asp100 contributes to the P(1),P(5)-bis(5'-adenosyl) pentaphosphate binding site. 4 residues coordinate 1D-myo-inositol hexakisphosphate: Arg102, Arg129, Arg152, and Arg171. Residue Arg102 participates in 5-diphospho-1D-myo-inositol 1,2,3,4,6-pentakisphosphate binding. Residues Arg152 and Arg171 each coordinate 5-diphospho-1D-myo-inositol 1,2,3,4,6-pentakisphosphate. The P(1),P(5)-bis(5'-adenosyl) pentaphosphate site is built by Arg152, Arg171, and Glu173.

Belongs to the Nudix hydrolase family. DIPP subfamily. Requires Mg(2+) as cofactor. The cofactor is Mn(2+). Zn(2+) is required as a cofactor.

It is found in the cytoplasm. It localises to the nucleus. It carries out the reaction diphospho-myo-inositol polyphosphate + H2O = myo-inositol polyphosphate + phosphate.. The catalysed reaction is P(1),P(6)-bis(5'-adenosyl) hexaphosphate + H2O = adenosine 5'-pentaphosphate + AMP + 2 H(+). It catalyses the reaction P(1),P(5)-bis(5'-adenosyl) pentaphosphate + H2O = adenosine 5'-tetraphosphate + AMP + 2 H(+). The enzyme catalyses [phosphate](n+1) + n H2O = (n+1) phosphate + n H(+). Its function is as follows. May eliminate potentially toxic dinucleoside polyphosphates during sporulation. Most active against diadenosine 5',5'''-P1,P6-hexaphosphate (Ap6A). Can also hydrolyze diadenosine 5',5'''-P1,P5-pentaphosphate (Ap5A), adenosine 5'-pentaphosphate (p5A), and adenosine 5'-tetraphosphate (p4A) are also substrates, but not diadenosine 5',5'''-P1,P4-tetraphosphate (Ap4A) or other dinucleotides, mononucleotides, nucleotide sugars, or nucleotide alcohols. Also cleaves a beta-phosphate from the diphosphate groups in PP-InsP5 (diphosphoinositol pentakisphosphate) and [PP]2-InsP4 (bisdiphosphoinositol tetrakisphosphate). Also has endopolyphosphatase activity. This Saccharomyces cerevisiae (strain ATCC 204508 / S288c) (Baker's yeast) protein is Diphosphoinositol polyphosphate phosphohydrolase DDP1 (DDP1).